A 740-amino-acid polypeptide reads, in one-letter code: Phosphoribosylformylglycinamidine synthase subunit PurL (740 aa).

Histidine 50 is an active-site residue. Residues tyrosine 53 and lysine 92 each coordinate ATP. Glutamate 94 contacts Mg(2+). Substrate-binding positions include 95–98 and arginine 117; that span reads SHNH. Histidine 96 acts as the Proton acceptor in catalysis. Aspartate 118 is a binding site for Mg(2+). Glutamine 241 provides a ligand contact to substrate. Aspartate 269 lines the Mg(2+) pocket. Residue 313 to 315 participates in substrate binding; sequence ESQ. ATP is bound by residues aspartate 495 and glycine 532. Position 533 (asparagine 533) interacts with Mg(2+). A substrate-binding site is contributed by serine 535.

This sequence belongs to the FGAMS family. As to quaternary structure, monomer. Part of the FGAM synthase complex composed of 1 PurL, 1 PurQ and 2 PurS subunits.

It localises to the cytoplasm. It carries out the reaction N(2)-formyl-N(1)-(5-phospho-beta-D-ribosyl)glycinamide + L-glutamine + ATP + H2O = 2-formamido-N(1)-(5-O-phospho-beta-D-ribosyl)acetamidine + L-glutamate + ADP + phosphate + H(+). It functions in the pathway purine metabolism; IMP biosynthesis via de novo pathway; 5-amino-1-(5-phospho-D-ribosyl)imidazole from N(2)-formyl-N(1)-(5-phospho-D-ribosyl)glycinamide: step 1/2. Functionally, part of the phosphoribosylformylglycinamidine synthase complex involved in the purines biosynthetic pathway. Catalyzes the ATP-dependent conversion of formylglycinamide ribonucleotide (FGAR) and glutamine to yield formylglycinamidine ribonucleotide (FGAM) and glutamate. The FGAM synthase complex is composed of three subunits. PurQ produces an ammonia molecule by converting glutamine to glutamate. PurL transfers the ammonia molecule to FGAR to form FGAM in an ATP-dependent manner. PurS interacts with PurQ and PurL and is thought to assist in the transfer of the ammonia molecule from PurQ to PurL. This chain is Phosphoribosylformylglycinamidine synthase subunit PurL, found in Brucella canis (strain ATCC 23365 / NCTC 10854 / RM-666).